The sequence spans 203 residues: MSRYTGPSWKRSRRLGISLSGTGKELARRSYIPGQHGPNHRGRLSEYGMQLQEKQKLRWMFGLNERQFRTLFARAGKIREGQHGTNFMILLERRLDNVVYRLGLATTREQARQLVNHGHITVDGKRVDIPSYEVKVGQTISLKEKSKNLQQVKDALEAVASRPSFVSFDEDKMEGQLVRFPERDEMEPEIDEALVVEYYNKLL.

In terms of domain architecture, S4 RNA-binding spans 93 to 153 (RRLDNVVYRL…EKSKNLQQVK (61 aa)).

This sequence belongs to the universal ribosomal protein uS4 family. Part of the 30S ribosomal subunit. Contacts protein S5. The interaction surface between S4 and S5 is involved in control of translational fidelity.

In terms of biological role, one of the primary rRNA binding proteins, it binds directly to 16S rRNA where it nucleates assembly of the body of the 30S subunit. Its function is as follows. With S5 and S12 plays an important role in translational accuracy. The protein is Small ribosomal subunit protein uS4 of Lactobacillus delbrueckii subsp. bulgaricus (strain ATCC 11842 / DSM 20081 / BCRC 10696 / JCM 1002 / NBRC 13953 / NCIMB 11778 / NCTC 12712 / WDCM 00102 / Lb 14).